We begin with the raw amino-acid sequence, 789 residues long: Fibrinogen alpha chain (789 aa).

A signal peptide spans 1–19 (MLSLRVTCLILSVASTVWT). The residue at position 46 (Ser46) is a Phosphoserine. Residues 69–554 (CRMKGLIDEA…GRARARPTRD (486 aa)) adopt a coiled-coil conformation. 2 stretches are compositionally biased toward basic and acidic residues: residues 263 to 287 (ERPGKDGGSRGDSPGDSRGDSRGDF) and 384 to 396 (KGDKELLIGKEKV). The interval 263–420 (ERPGKDGGSR…TITKTVTGPD (158 aa)) is disordered. Polar residues predominate over residues 397–416 (TSSGTSTTHRSCSKTITKTV). A disulfide bridge links Cys408 with Cys438. The residue at position 447 (Ser447) is a Phosphoserine. 4-hydroxyproline; by P4HA1 is present on Pro504. Residues 526–541 (ADEAGSEAHREGETRN) show a composition bias toward basic and acidic residues. Residues 526–555 (ADEAGSEAHREGETRNTKRGRARARPTRDC) are disordered. Residues 546-787 (RARARPTRDC…AVRMKIRPLV (242 aa)) form the Fibrinogen C-terminal domain. Residue Asn609 is glycosylated (N-linked (GlcNAc...) asparagine). 4 residues coordinate Ca(2+): Asp714, Asp716, Trp718, and Glu720. The cysteines at positions 722 and 735 are disulfide-linked.

Heterohexamer; disulfide linked. Contains 2 sets of 3 non-identical chains (alpha, beta and gamma). The 2 heterotrimers are in head to head conformation with the N-termini in a small central domain. In terms of processing, conversion of fibrinogen to fibrin is triggered by thrombin, which cleaves fibrinopeptides A and B from alpha and beta chains, and thus exposes the N-terminal polymerization sites responsible for the formation of the soft clot. The soft clot is converted into the hard clot by factor XIIIA which catalyzes the epsilon-(gamma-glutamyl)lysine cross-linking between gamma chains (stronger) and between alpha chains (weaker) of different monomers. Forms F13A-mediated cross-links between a glutamine and the epsilon-amino group of a lysine residue, forming fibronectin-fibrinogen heteropolymers. Post-translationally, phosphorylated by FAM20C in the extracellular medium. In terms of tissue distribution, expressed in liver.

It localises to the secreted. In terms of biological role, cleaved by the protease thrombin to yield monomers which, together with fibrinogen beta (FGB) and fibrinogen gamma (FGG), polymerize to form an insoluble fibrin matrix. Fibrin has a major function in hemostasis as one of the primary components of blood clots. In addition, functions during the early stages of wound repair to stabilize the lesion and guide cell migration during re-epithelialization. Was originally thought to be essential for platelet aggregation, based on in vitro studies using anticoagulated blood. However, subsequent studies have shown that it is not absolutely required for thrombus formation in vivo. Enhances expression of SELP in activated platelets via an ITGB3-dependent pathway. Maternal fibrinogen is essential for successful pregnancy. Fibrin deposition is also associated with infection, where it protects against IFNG-mediated hemorrhage. May also facilitate the immune response via both innate and T-cell mediated pathways. This is Fibrinogen alpha chain from Mus musculus (Mouse).